A 190-amino-acid chain; its full sequence is Elongation factor P (190 aa).

It belongs to the elongation factor P family.

It localises to the cytoplasm. Its pathway is protein biosynthesis; polypeptide chain elongation. Its function is as follows. Involved in peptide bond synthesis. Stimulates efficient translation and peptide-bond synthesis on native or reconstituted 70S ribosomes in vitro. Probably functions indirectly by altering the affinity of the ribosome for aminoacyl-tRNA, thus increasing their reactivity as acceptors for peptidyl transferase. The protein is Elongation factor P of Hyphomonas neptunium (strain ATCC 15444).